Here is a 331-residue protein sequence, read N- to C-terminus: Protein RecA (331 aa).

67–74 (GPESSGKT) is an ATP binding site.

This sequence belongs to the RecA family.

The protein resides in the cytoplasm. In terms of biological role, can catalyze the hydrolysis of ATP in the presence of single-stranded DNA, the ATP-dependent uptake of single-stranded DNA by duplex DNA, and the ATP-dependent hybridization of homologous single-stranded DNAs. It interacts with LexA causing its activation and leading to its autocatalytic cleavage. The protein is Protein RecA of Wigglesworthia glossinidia brevipalpis.